The following is a 361-amino-acid chain: MMVNHNNGQRPTDIDSRLRQTEQDKLLFHDFLGSKNPTLASTSMADHRLPPDNKAAKAAMTPSTASASSAGGLGGLSSTSDLVERHSGGGNHLDGIQLFGPRSDVSGSIMSNRFSGNKRSNSDSHFTTQEHPETLHWSKLLRNGPGSFSMNVNPLANQPPRGGGQISHLLHQLSTSRFKDENVGPSVIAQTAADEGSRTGMKGPGILSSFTMPNSSKLESFAPSNTGNRKDLASSTKQMTIFYGGQAHVFDDVHPNKADVIMALAGSSGGSWSTGLSHKPKSKNNTSDGPYKLGQMYEGGSSKETPQMPPEFRARPSHQPTSSACHRIFTQPGREHQGSIISRGRDIRDPVHRSDPEKEAT.

Disordered regions lie at residues 53-78 (NKAA…GLSS), 113-134 (RFSG…HPET), 190-232 (QTAA…RKDL), and 268-361 (SGGS…KEAT). Residues 56-78 (AKAAMTPSTASASSAGGLGGLSS) show a composition bias toward low complexity. Composition is skewed to polar residues over residues 113 to 127 (RFSG…SHFT) and 208 to 232 (SSFT…RKDL). The 36-residue stretch at 232-267 (LASSTKQMTIFYGGQAHVFDDVHPNKADVIMALAGS) folds into the Tify domain. A compositionally biased stretch (basic and acidic residues) spans 333–361 (GREHQGSIISRGRDIRDPVHRSDPEKEAT).

It belongs to the TIFY/JAZ family. Interacts with AFPH2/NINJA. In terms of processing, ubiquitinated. Targeted for degradation by the SCF(COI1) E3 ubiquitin ligase-proteasome pathway during jasmonate signaling.

Its subcellular location is the nucleus. Repressor of jasmonate responses. The protein is Protein TIFY 8 of Arabidopsis thaliana (Mouse-ear cress).